The sequence spans 186 residues: Ribosome-recycling factor (186 aa).

Belongs to the RRF family.

The protein localises to the cytoplasm. Its function is as follows. Responsible for the release of ribosomes from messenger RNA at the termination of protein biosynthesis. May increase the efficiency of translation by recycling ribosomes from one round of translation to another. This chain is Ribosome-recycling factor, found in Methylibium petroleiphilum (strain ATCC BAA-1232 / LMG 22953 / PM1).